The chain runs to 179 residues: Lipoprotein signal peptidase (179 aa).

The next 4 helical transmembrane spans lie at 10–30 (LFQF…AIII), 48–68 (VPVL…AFSF), 75–95 (WQHY…IFWL), and 101–121 (NAMI…GNLI). Active-site residues include Asp-131 and Asp-149. Residues 141-161 (HFPAFNIADSAITIGTILLLI) traverse the membrane as a helical segment.

The protein belongs to the peptidase A8 family.

It localises to the cell inner membrane. It carries out the reaction Release of signal peptides from bacterial membrane prolipoproteins. Hydrolyzes -Xaa-Yaa-Zaa-|-(S,diacylglyceryl)Cys-, in which Xaa is hydrophobic (preferably Leu), and Yaa (Ala or Ser) and Zaa (Gly or Ala) have small, neutral side chains.. It participates in protein modification; lipoprotein biosynthesis (signal peptide cleavage). Its function is as follows. This protein specifically catalyzes the removal of signal peptides from prolipoproteins. The chain is Lipoprotein signal peptidase from Acinetobacter baylyi (strain ATCC 33305 / BD413 / ADP1).